The chain runs to 161 residues: Photosystem I reaction center subunit XI (161 aa).

The next 2 membrane-spanning stretches (helical) occupy residues Leu84–Val104 and Phe126–Glu146.

The protein belongs to the PsaL family.

The protein resides in the cellular thylakoid membrane. This Trichodesmium erythraeum (strain IMS101) protein is Photosystem I reaction center subunit XI.